Here is a 266-residue protein sequence, read N- to C-terminus: 4-hydroxy-tetrahydrodipicolinate reductase (266 aa).

10–15 provides a ligand contact to NAD(+); the sequence is GPRGRM. Residue Lys-38 participates in NADP(+) binding. NAD(+) contacts are provided by residues 99–101 and 125–128; these read GTT and APNF. His-155 serves as the catalytic Proton donor/acceptor. Position 156 (His-156) interacts with (S)-2,3,4,5-tetrahydrodipicolinate. Residue Lys-159 is the Proton donor of the active site. 165–166 is a (S)-2,3,4,5-tetrahydrodipicolinate binding site; that stretch reads GT.

It belongs to the DapB family.

Its subcellular location is the cytoplasm. It carries out the reaction (S)-2,3,4,5-tetrahydrodipicolinate + NAD(+) + H2O = (2S,4S)-4-hydroxy-2,3,4,5-tetrahydrodipicolinate + NADH + H(+). It catalyses the reaction (S)-2,3,4,5-tetrahydrodipicolinate + NADP(+) + H2O = (2S,4S)-4-hydroxy-2,3,4,5-tetrahydrodipicolinate + NADPH + H(+). It functions in the pathway amino-acid biosynthesis; L-lysine biosynthesis via DAP pathway; (S)-tetrahydrodipicolinate from L-aspartate: step 4/4. Functionally, catalyzes the conversion of 4-hydroxy-tetrahydrodipicolinate (HTPA) to tetrahydrodipicolinate. This Bacillus cereus (strain ZK / E33L) protein is 4-hydroxy-tetrahydrodipicolinate reductase.